The primary structure comprises 244 residues: Orotidine 5'-phosphate decarboxylase (244 aa).

Residues aspartate 14, lysine 36, 63-72 (DLKFHDIPNT), threonine 127, arginine 188, glutamine 197, glycine 217, and arginine 218 contribute to the substrate site. The active-site Proton donor is lysine 65.

The protein belongs to the OMP decarboxylase family. Type 1 subfamily. As to quaternary structure, homodimer.

It carries out the reaction orotidine 5'-phosphate + H(+) = UMP + CO2. Its pathway is pyrimidine metabolism; UMP biosynthesis via de novo pathway; UMP from orotate: step 2/2. Functionally, catalyzes the decarboxylation of orotidine 5'-monophosphate (OMP) to uridine 5'-monophosphate (UMP). In Syntrophotalea carbinolica (strain DSM 2380 / NBRC 103641 / GraBd1) (Pelobacter carbinolicus), this protein is Orotidine 5'-phosphate decarboxylase.